Reading from the N-terminus, the 135-residue chain is Allatotropins (135 aa).

An N-terminal signal peptide occupies residues 1 to 22 (MNFSMHLVLAVAAAACLCVVTA). Residue F51 is modified to Phenylalanine amide. Residues 55 to 135 (DRPHTRAELY…SSEELLRNVA (81 aa)) constitute a propeptide that is removed on maturation.

In terms of tissue distribution, allatotropin: Expressed in corpora cardiaca (CC), corpora allata (CA), antennal lobe (AL) and gnathal ganglion (GNG) (protein level). Expression in AL detected in all animals, expression in GNG detected in most animals and expression in CA and CC detected in few animals (at protein level). Allatotropin-PP-1: Expressed in corpora cardiaca (CC), corpora allata (CA), antennal lobe (AL) and gnathal ganglion (GNG) (at protein level). Expression in AL detected in all animals and expression in GNG, CA and CC detected in some animals (at protein level).

The protein localises to the secreted. In terms of biological role, neuropeptide stimulator of juvenile hormone synthesis. The protein is Allatotropins of Agrotis ipsilon (Black cutworm moth).